Reading from the N-terminus, the 302-residue chain is Protein transport protein SEC13 homolog B (302 aa).

WD repeat units follow at residues 9–48 (GHED…GSQQ), 54–95 (GHRG…QWTQ), 101–142 (DHKS…GWDT), 148–201 (AHPV…WKMD), 208–251 (KHTD…EQWE), and 257–296 (DFMT…EWEQ).

Belongs to the WD repeat SEC13 family. As to quaternary structure, part of the nuclear pore complex (NPC). The NPC has an eight-fold symmetrical structure comprising a central transport channel and two rings, the cytoplasmic and nuclear rings, to which eight filaments are attached. The cytoplasmic filaments have loose ends, while the nuclear filaments are joined in a distal ring, forming a nuclear basket. NPCs are highly dynamic in configuration and composition, and can be devided in 3 subcomplexes, the NUP62 subcomplex, the NUP107-160 subcomplex and the NUP93 subcomplex, containing approximately 30 different nucleoporin proteins. Interacts with MAG5, SEC31A and SEC31B.

The protein resides in the golgi apparatus. It localises to the endoplasmic reticulum. Its subcellular location is the nucleus envelope. The protein localises to the nucleus. It is found in the nuclear pore complex. Required for protein transport from the endoplasmic reticulum to the Golgi apparatus. The polypeptide is Protein transport protein SEC13 homolog B (Arabidopsis thaliana (Mouse-ear cress)).